Reading from the N-terminus, the 353-residue chain is Phenol 2-monooxygenase, reductase component DmpP (353 aa).

Residues 3–93 (YNVTIEPTGE…DLVIEADVDA (91 aa)) form the 2Fe-2S ferredoxin-type domain. The [2Fe-2S] cluster site is built by cysteine 37, cysteine 42, cysteine 45, and cysteine 77. The region spanning 102–201 (VEDYRGVVSA…SGPYGQFFVR (100 aa)) is the FAD-binding FR-type domain.

As to quaternary structure, the multicomponent enzyme phenol hydroxylase is formed by DmpL (P1 component), DmpM (P2 component), DmpN (P3 component), DmpO (P4 component) and DmpP (P5 component). Requires FAD as cofactor. [2Fe-2S] cluster serves as cofactor.

The enzyme catalyses phenol + NADH + O2 + H(+) = catechol + NAD(+) + H2O. It participates in aromatic compound metabolism; phenol degradation. Its function is as follows. Part of a multicomponent enzyme which catalyzes the degradation of phenol and some of its methylated derivatives. DmpP probably transfers electrons from NADH, via FAD and the iron-sulfur center, to the oxygenase component of the complex. Required for growth on phenol and for in vitro phenol hydroxylase activity. In Pseudomonas sp. (strain CF600), this protein is Phenol 2-monooxygenase, reductase component DmpP.